A 367-amino-acid polypeptide reads, in one-letter code: Peptide chain release factor 2 (367 aa).

Glutamine 247 bears the N5-methylglutamine mark.

The protein belongs to the prokaryotic/mitochondrial release factor family. Post-translationally, methylated by PrmC. Methylation increases the termination efficiency of RF2.

It localises to the cytoplasm. In terms of biological role, peptide chain release factor 2 directs the termination of translation in response to the peptide chain termination codons UGA and UAA. The sequence is that of Peptide chain release factor 2 from Caulobacter sp. (strain K31).